We begin with the raw amino-acid sequence, 554 residues long: Flavin-dependent halogenase ascD (554 aa).

Residues Gly-15, Gly-18, and Glu-48 each coordinate FAD. Chloride is bound by residues Ser-331 and Gly-332. FAD is bound at residue Val-333.

It belongs to the flavin-dependent halogenase family.

The catalysed reaction is ilicicolin B + FADH2 + chloride + O2 = ilicicolin A + FAD + 2 H2O + H(+). It functions in the pathway secondary metabolite biosynthesis; terpenoid biosynthesis. Flavin-dependent halogenase; part of the asc-1 gene cluster that mediates the biosynthesis of both ascochlorin and ascofuranone, a strong inhibitor of cyanide-insensitive alternative oxidases and a promising drug candidate against African trypanosomiasis. The first step in the pathway is performed by the non-reducing polyketide synthase ascC that produces orsellinic acid by condensing acetyl-CoA with 3 malonyl-CoA units. Orsellinic acid is then prenylated by the prenyltransferase ascA to yield ilicicolinic acid B. Ilicicolinic acid B is further reduced to ilicicolin B by the reductase ascB. The halogenase ascD then chlorinates ilicicolin B to produce ilicicolin A which is converted to ilicicolin A epoxide by the cytochrome P450 monooxygenase ascE that catalyzes stereoselective epoxidation of the terminal double bond of the prenyl group. Ilicicolin A epoxide is the last common precursor for the biosynthesis of ascofuranone and ascochlorin. The terpene cyclase ascF produces a monocyclic terpene, and the cyclization reaction is proposed to be initiated by protonation of the terminal epoxide of ilicicolin A epoxide to generate a monocyclic tertiarycation, which is followed by a series of hydride and methyl shifts with abstraction of proton, leading to the formation of the (14S,15R,19R)-trimethylcyclohexanone ring structure of ilicicolin C, which is finally reduced to ascochlorin by the dehydrogenase ascG. On the other hand, ilicicolin A epoxide is hydroxylated by the cytochrome P450 monooxygenase ascH, and the resultant product is cyclized by the terpene cyclase ascI to ascofuranol via protonation-initiated epoxide ring opening, which facilitates the 6-endo-tet cyclization to form the tetrahy-drofuran ring. Finally, ascofuranol is oxidized into ascofuranone by ascJ. This is Flavin-dependent halogenase ascD from Acremonium egyptiacum (Oospora egyptiaca).